The primary structure comprises 137 residues: Ribonuclease VapC51 (137 aa).

A PINc domain is found at 5-120; it reads YLLDTSVIKR…HYDADFDLIA (116 aa). Positions 8 and 95 each coordinate Mg(2+).

It belongs to the PINc/VapC protein family. It depends on Mg(2+) as a cofactor.

Its function is as follows. Toxic component of a type II toxin-antitoxin (TA) system. An RNase. Its cognate antitoxin is VapB51. This Mycobacterium tuberculosis (strain ATCC 25618 / H37Rv) protein is Ribonuclease VapC51.